The chain runs to 428 residues: Divalent metal cation transporter MntH (428 aa).

Helical transmembrane passes span 33 to 53 (WYLL…GNVA), 60 to 80 (AQFG…AALV), 114 to 134 (QAEI…AIAL), 136 to 156 (IMFN…SLLL), 171 to 191 (VITA…FVVT), 210 to 230 (SVLL…VYLH), 258 to 278 (VGLA…VAAL), 299 to 319 (TLGA…GLAS), 334 to 356 (LLHW…LAIL), 365 to 385 (TLVL…LPLV), and 406 to 426 (VGWV…YLTV).

It belongs to the NRAMP family.

It localises to the cell membrane. Functionally, h(+)-stimulated, divalent metal cation uptake system. Transports zinc and iron. Can also interact with manganese and copper. This chain is Divalent metal cation transporter MntH, found in Mycobacterium tuberculosis (strain CDC 1551 / Oshkosh).